An 88-amino-acid polypeptide reads, in one-letter code: UPF0297 protein STER_1937 (88 aa).

It belongs to the UPF0297 family.

This chain is UPF0297 protein STER_1937, found in Streptococcus thermophilus (strain ATCC BAA-491 / LMD-9).